Here is a 1017-residue protein sequence, read N- to C-terminus: Putative calcium-transporting ATPase 13, plasma membrane-type (1017 aa).

Met-1 is subject to N-acetylmethionine. The Cytoplasmic portion of the chain corresponds to 1–147 (MRRNVSDHAE…NTYTRQPSKG (147 aa)). Positions 20–31 (LLELPKTLSKSN) are interaction with calmodulin. The chain crosses the membrane as a helical span at residues 148-168 (LFHFVVEAFKDLTILILLGCA). The Lumenal segment spans residues 169-186 (TLSLGFGIKEHGLKEGWY). The helical transmembrane segment at 187–207 (DGGSIFVAVFLVVAVSAVSNF) threads the bilayer. At 208 to 336 (RQNRQFDKLS…NEQTPLQSRL (129 aa)) the chain is on the cytoplasmic side. The helical transmembrane segment at 337–356 (DKLTSSIGKVGLLVAFLVLL) threads the bilayer. The Lumenal portion of the chain corresponds to 357 to 393 (VLLIRYFTGTTKDESGNREYNGKTTKSDEIVNAVVKM). A helical membrane pass occupies residues 394 to 411 (VAAAVTIIVVAIPEGLPL). Residues 412 to 802 (AVTLTLAYSM…KWGRCVYNNI (391 aa)) are Cytoplasmic-facing. Asp-449 acts as the 4-aspartylphosphate intermediate in catalysis. The Mg(2+) site is built by Asp-747 and Asp-751. The chain crosses the membrane as a helical span at residues 803–821 (QKFIQFQLTVNVAALVINF). At 822 to 832 (VAAVSAGDVPL) the chain is on the lumenal side. A helical transmembrane segment spans residues 833–853 (TAVQLLWVNLIMDTLGALALA). Residues 854 to 873 (TEKPTNDLMKKKPIGRVAPL) are Cytoplasmic-facing. The chain crosses the membrane as a helical span at residues 874–896 (ITNIMWRNLLAQAFYQISVLLVL). The Lumenal portion of the chain corresponds to 897 to 905 (QFRGRSIFN). Residues 906-926 (VTEKVKNTLIFNTFVLCQVFN) form a helical membrane-spanning segment. Topologically, residues 927-944 (EFNARSLEKKNVFKGLHK) are cytoplasmic. Residues 945-966 (NRLFIGIIVVTVVLQVVMVEFL) form a helical membrane-spanning segment. At 967–976 (KRFADTERLN) the chain is on the lumenal side. The chain crosses the membrane as a helical span at residues 977–998 (LGQWGVCIAIAAASWPIGWLVK). Topologically, residues 999–1002 (SVPV) are cytoplasmic.

This sequence belongs to the cation transport ATPase (P-type) (TC 3.A.3) family. Type IIB subfamily.

It localises to the membrane. It carries out the reaction Ca(2+)(in) + ATP + H2O = Ca(2+)(out) + ADP + phosphate + H(+). With respect to regulation, activated by calmodulin. Its function is as follows. This magnesium-dependent enzyme catalyzes the hydrolysis of ATP coupled with the translocation of calcium from the cytosol out of the cell or into organelles. This chain is Putative calcium-transporting ATPase 13, plasma membrane-type (ACA13), found in Arabidopsis thaliana (Mouse-ear cress).